Reading from the N-terminus, the 320-residue chain is GDP-L-fucose synthase (320 aa).

Residue 14–20 (GGSGLVG) participates in NADP(+) binding. The active-site Proton donor/acceptor is Tyr-142. Residues Lys-146, 169-172 (PTNI), and His-185 each bind NADP(+). Residues Lys-193, Arg-214, and Asp-276 each contribute to the substrate site.

This sequence belongs to the NAD(P)-dependent epimerase/dehydratase family. Fucose synthase subfamily.

It catalyses the reaction GDP-beta-L-fucose + NADP(+) = GDP-4-dehydro-alpha-D-rhamnose + NADPH + H(+). It participates in nucleotide-sugar biosynthesis; GDP-L-fucose biosynthesis via de novo pathway; GDP-L-fucose from GDP-alpha-D-mannose: step 2/2. Its function is as follows. Catalyzes the two-step NADP-dependent conversion of GDP-4-dehydro-6-deoxy-D-mannose to GDP-fucose, involving an epimerase and a reductase reaction. The sequence is that of GDP-L-fucose synthase (ger) from Dictyostelium discoideum (Social amoeba).